The following is a 1065-amino-acid chain: Ceruloplasmin (1065 aa).

The signal sequence occupies residues 1–19 (MKILILGIFLFLCSTPAWA). Plastocyanin-like domains lie at 20 to 200 (KEKH…LIIC) and 209 to 357 (KEKH…VQEC). Tyr55, Gly64, and Tyr67 together coordinate Na(+). His120 and His122 together coordinate Cu(2+). Residue His120 coordinates O2. Residue Lys128 coordinates Ca(2+). N-linked (GlcNAc...) (complex) asparagine glycosylation is present at Asn138. The Ca(2+) site is built by Gln143, Asp146, and Asp147. Cysteines 174 and 200 form a disulfide. His180 and His182 together coordinate Cu(2+). His180 contributes to the O2 binding site. Na(+) is bound at residue Ser256. Cysteines 276 and 357 form a disulfide. The Cu(2+) site is built by His295, Cys338, and His343. Asn358 and Asn397 each carry an N-linked (GlcNAc...) (complex) asparagine glycan. 2 Plastocyanin-like domains span residues 370–560 (HVRH…MKIC) and 570–718 (RQKD…VNQC). Positions 408, 417, and 420 each coordinate Na(+). Cys534 and Cys560 are joined by a disulfide. A glycan (N-linked (GlcNAc...) asparagine) is linked at Asn588. Ser617 is a Na(+) binding site. The cysteines at positions 637 and 718 are disulfide-linked. The Cu(2+) site is built by His656, Cys699, His704, and Met709. Residue Cys699 is the Nucleophile; for glutathione peroxidase activity of the active site. Ser722 bears the Phosphoserine; by FAM20C mark. Plastocyanin-like domains lie at 730 to 900 (GERT…LIVC) and 908 to 1061 (FNPR…QNED). N-linked (GlcNAc...) (complex) asparagine glycosylation is present at Asn762. Residues Phe767, Gly776, and Tyr779 each coordinate Na(+). Cys874 and Cys900 are oxidised to a cystine. Residue Asn926 is glycosylated (N-linked (GlcNAc...) asparagine). Position 955 (Ser955) interacts with Na(+). Positions 994, 997, 999, 1039, 1040, 1041, 1045, and 1050 each coordinate Cu(2+). Residues His997 and His999 each contribute to the O2 site. His1041 provides a ligand contact to O2.

Belongs to the multicopper oxidase family. In terms of assembly, found in a complex with MPO and LTF; interacts directly with MPO and LTF, which allows Fe(3+) incorporation into LTF, activation of CP ferroxidase activity and protection of CP antioxidant properties by MPO. The cofactor is Cu(2+). In terms of tissue distribution, expressed by the liver and secreted in plasma.

It localises to the secreted. It carries out the reaction 4 Fe(2+) + O2 + 4 H(+) = 4 Fe(3+) + 2 H2O. It catalyses the reaction 4 Cu(+) + O2 + 4 H(+) = 4 Cu(2+) + 2 H2O. The catalysed reaction is a hydroperoxide + 2 glutathione = an alcohol + glutathione disulfide + H2O. The enzyme catalyses 4 nitric oxide + O2 + 2 H2O = 4 nitrite + 4 H(+). It carries out the reaction 2 glutathione + H2O2 = glutathione disulfide + 2 H2O. Its function is as follows. Multifunctional blue, copper-binding (6-7 atoms per molecule) glycoprotein. It has ferroxidase activity oxidizing Fe(2+) to Fe(3+) without releasing radical oxygen species. It is involved in iron transport across the cell membrane. Copper ions provide a large number of enzymatic activites. Oxidizes highly toxic ferrous ions to the ferric state for further incorporation onto apo-transferrins, catalyzes Cu(+) oxidation and promotes the oxidation of biogenic amines such as norepinephrin and serotonin. Provides Cu(2+) ions for the ascorbate-mediated deaminase degradation of the heparan sulfate chains of GPC1. Has glutathione peroxidase-like activity, can remove both hydrogen peroxide and lipid hydroperoxide in the presence of thiols. Also shows NO-oxidase and NO2 synthase activities that determine endocrine NO homeostasis. The protein is Ceruloplasmin of Homo sapiens (Human).